The sequence spans 169 residues: uncharacterized protein (169 aa).

This is an uncharacterized protein from Buchnera aphidicola subsp. Acyrthosiphon pisum (strain APS) (Acyrthosiphon pisum symbiotic bacterium).